The primary structure comprises 321 residues: uncharacterized protein (321 aa).

Tyr-60 (proton donor) is an active-site residue. Residue His-118 participates in substrate binding.

Belongs to the aldo/keto reductase family.

This is an uncharacterized protein from Schizosaccharomyces pombe (strain 972 / ATCC 24843) (Fission yeast).